We begin with the raw amino-acid sequence, 451 residues long: D-ribitol-5-phosphate cytidylyltransferase (451 aa).

Positions 1 to 29 are disordered; it reads MEAGPPGSARPAEPGPCLSGQRGADHTAS.

Belongs to the IspD/TarI cytidylyltransferase family. IspD subfamily. In terms of assembly, homodimer. In terms of tissue distribution, ubiquitously expressed, with high expression in brain.

The protein resides in the cytoplasm. The protein localises to the cytosol. It carries out the reaction D-ribitol 5-phosphate + CTP + H(+) = CDP-L-ribitol + diphosphate. The catalysed reaction is D-ribose 5-phosphate + CTP + H(+) = CDP-D-ribose + diphosphate. It catalyses the reaction D-ribulose 5-phosphate + CTP + H(+) = CDP-D-ribulose + diphosphate. It participates in protein modification; protein glycosylation. Its function is as follows. Cytidylyltransferase required for protein O-linked mannosylation. Catalyzes the formation of CDP-ribitol nucleotide sugar from D-ribitol 5-phosphate. CDP-ribitol is a substrate of FKTN during the biosynthesis of the phosphorylated O-mannosyl trisaccharide (N-acetylgalactosamine-beta-3-N-acetylglucosamine-beta-4-(phosphate-6-)mannose), a carbohydrate structure present in alpha-dystroglycan (DAG1), which is required for binding laminin G-like domain-containing extracellular proteins with high affinity. Shows activity toward other pentose phosphate sugars and mediates formation of CDP-ribulose or CDP-ribose using CTP and ribulose-5-phosphate or ribose-5-phosphate, respectively. Not Involved in dolichol production. The chain is D-ribitol-5-phosphate cytidylyltransferase from Homo sapiens (Human).